Reading from the N-terminus, the 336-residue chain is Glycerol-3-phosphate dehydrogenase [NAD(P)+] (336 aa).

NADPH contacts are provided by tryptophan 11, arginine 33, and lysine 105. Residues lysine 105, glycine 141, and serine 143 each coordinate sn-glycerol 3-phosphate. NADPH is bound at residue alanine 145. Positions 196, 249, 259, 260, and 261 each coordinate sn-glycerol 3-phosphate. Residue lysine 196 is the Proton acceptor of the active site. Residue arginine 260 participates in NADPH binding. Residues valine 284 and glutamate 286 each contribute to the NADPH site.

Belongs to the NAD-dependent glycerol-3-phosphate dehydrogenase family.

The protein localises to the cytoplasm. It catalyses the reaction sn-glycerol 3-phosphate + NAD(+) = dihydroxyacetone phosphate + NADH + H(+). The enzyme catalyses sn-glycerol 3-phosphate + NADP(+) = dihydroxyacetone phosphate + NADPH + H(+). The protein operates within membrane lipid metabolism; glycerophospholipid metabolism. Functionally, catalyzes the reduction of the glycolytic intermediate dihydroxyacetone phosphate (DHAP) to sn-glycerol 3-phosphate (G3P), the key precursor for phospholipid synthesis. This is Glycerol-3-phosphate dehydrogenase [NAD(P)+] from Delftia acidovorans (strain DSM 14801 / SPH-1).